A 308-amino-acid polypeptide reads, in one-letter code: tRNA-cytidine(32) 2-sulfurtransferase (308 aa).

The short motif at 39–44 (SGGKDS) is the PP-loop motif element. Residues Cys114, Cys117, and Cys205 each contribute to the [4Fe-4S] cluster site.

Belongs to the TtcA family. Homodimer. Mg(2+) serves as cofactor. It depends on [4Fe-4S] cluster as a cofactor.

The protein localises to the cytoplasm. The catalysed reaction is cytidine(32) in tRNA + S-sulfanyl-L-cysteinyl-[cysteine desulfurase] + AH2 + ATP = 2-thiocytidine(32) in tRNA + L-cysteinyl-[cysteine desulfurase] + A + AMP + diphosphate + H(+). It functions in the pathway tRNA modification. Its function is as follows. Catalyzes the ATP-dependent 2-thiolation of cytidine in position 32 of tRNA, to form 2-thiocytidine (s(2)C32). The sulfur atoms are provided by the cysteine/cysteine desulfurase (IscS) system. The protein is tRNA-cytidine(32) 2-sulfurtransferase of Cupriavidus taiwanensis (strain DSM 17343 / BCRC 17206 / CCUG 44338 / CIP 107171 / LMG 19424 / R1) (Ralstonia taiwanensis (strain LMG 19424)).